The sequence spans 225 residues: Peptidyl-tRNA hydrolase (225 aa).

A tRNA-binding site is contributed by Y14. H19 functions as the Proton acceptor in the catalytic mechanism. Residues F64, N66, and N112 each contribute to the tRNA site. The interval 187–225 is disordered; the sequence is MQPPKPEKPKGEAKPAAPEAPEAAPDTRSALQRLADRFR. The segment covering 200–210 has biased composition (low complexity); it reads KPAAPEAPEAA.

It belongs to the PTH family. In terms of assembly, monomer.

The protein localises to the cytoplasm. The catalysed reaction is an N-acyl-L-alpha-aminoacyl-tRNA + H2O = an N-acyl-L-amino acid + a tRNA + H(+). Functionally, hydrolyzes ribosome-free peptidyl-tRNAs (with 1 or more amino acids incorporated), which drop off the ribosome during protein synthesis, or as a result of ribosome stalling. In terms of biological role, catalyzes the release of premature peptidyl moieties from peptidyl-tRNA molecules trapped in stalled 50S ribosomal subunits, and thus maintains levels of free tRNAs and 50S ribosomes. In Cereibacter sphaeroides (strain ATCC 17025 / ATH 2.4.3) (Rhodobacter sphaeroides), this protein is Peptidyl-tRNA hydrolase.